A 116-amino-acid polypeptide reads, in one-letter code: Small ribosomal subunit protein uS13m (116 aa).

The interval 92–116 (HQDGSPLRGQRTHTNARTARKQIRK) is disordered.

This sequence belongs to the universal ribosomal protein uS13 family. In terms of assembly, part of the small ribosomal subunit.

The protein localises to the mitochondrion. In terms of biological role, located at the top of the head of the small subunit, it contacts several helices of the 18S rRNA. In Triticum aestivum (Wheat), this protein is Small ribosomal subunit protein uS13m (RPS13).